The chain runs to 154 residues: Glycosylation-dependent cell adhesion molecule 1 (154 aa).

An N-terminal signal peptide occupies residues 1-18 (MKFLCILLLASLAATSLA). O-linked (GalNAc...) threonine; partial glycosylation occurs at T34. Residues S48, S53, S57, S59, and S65 each carry the phosphoserine modification. Positions 51-65 (DLSKEPSISREDLIS) are enriched in basic and acidic residues. Positions 51–115 (DLSKEPSISR…EHAPSDASTT (65 aa)) are disordered. N96 is a glycosylation site (N-linked (GlcNAc...) asparagine).

Belongs to the PP3/GlyCAM-1 family. Highly and specifically expressed in the lactating mammary gland.

Its subcellular location is the membrane. The protein is Glycosylation-dependent cell adhesion molecule 1 (GLYCAM1) of Capra hircus (Goat).